A 72-amino-acid chain; its full sequence is DNA gyrase inhibitor YacG (72 aa).

Residues cysteine 7, cysteine 10, cysteine 26, and cysteine 30 each contribute to the Zn(2+) site. Residues 44–72 (SIAGEEHTPSSDTARPQLSAEDLALLEQD) are disordered.

It belongs to the DNA gyrase inhibitor YacG family. In terms of assembly, interacts with GyrB. Zn(2+) serves as cofactor.

Inhibits all the catalytic activities of DNA gyrase by preventing its interaction with DNA. Acts by binding directly to the C-terminal domain of GyrB, which probably disrupts DNA binding by the gyrase. This chain is DNA gyrase inhibitor YacG, found in Tolumonas auensis (strain DSM 9187 / NBRC 110442 / TA 4).